A 759-amino-acid polypeptide reads, in one-letter code: TY1 enhancer activator (759 aa).

The disordered stretch occupies residues 1–61 (MTAPLWPNKN…GTGANTLTNG (61 aa)). The residue at position 22 (Thr22) is a Phosphothreonine. Residues 30 to 51 (SSTNASSNEENSRSSSAANVRS) show a composition bias toward low complexity. Positions 70-96 (CTNCRNRRKKCDLGFPCGNCSRLELVC) form a DNA-binding region, zn(2)-C6 fungal-type. The disordered stretch occupies residues 229–254 (LTPQGEKKKKPLVKGSLYPEGPVSYK). The short motif at 744 to 752 (DDLIRELFG) is the 9aaTAD element. At Thr755 the chain carries Phosphothreonine.

The protein resides in the nucleus. In terms of biological role, TY1 element enhancer binding protein. Binds to the DNA sequence 5'-TCGGTGGTATTATTCCGA-3'. This chain is TY1 enhancer activator (TEA1), found in Saccharomyces cerevisiae (strain ATCC 204508 / S288c) (Baker's yeast).